Consider the following 338-residue polypeptide: DNA-directed RNA polymerase subunit alpha (338 aa).

The tract at residues 1–234 (MIERNWNELI…DQLQIFITFE (234 aa)) is alpha N-terminal domain (alpha-NTD). Positions 250-338 (FNPALLKKVD…DLAKKFEDQI (89 aa)) are alpha C-terminal domain (alpha-CTD).

It belongs to the RNA polymerase alpha chain family. Homodimer. The RNAP catalytic core consists of 2 alpha, 1 beta, 1 beta' and 1 omega subunit. When a sigma factor is associated with the core the holoenzyme is formed, which can initiate transcription.

The catalysed reaction is RNA(n) + a ribonucleoside 5'-triphosphate = RNA(n+1) + diphosphate. Its function is as follows. DNA-dependent RNA polymerase catalyzes the transcription of DNA into RNA using the four ribonucleoside triphosphates as substrates. In Caulobacter sp. (strain K31), this protein is DNA-directed RNA polymerase subunit alpha.